A 1825-amino-acid chain; its full sequence is Serine protease/ABC transporter B family protein tagD (1825 aa).

An N-terminal signal peptide occupies residues 1–26 (MKSNTNIRVLLVSGLILIFIFLGIKF). A Peptidase S8 domain is found at 307 to 727 (PKAIFGTKDT…NAVFDTFAGA (421 aa)). Residues Asp-338 and His-384 each act as charge relay system in the active site. Residue Asn-629 is glycosylated (N-linked (GlcNAc...) asparagine). Ser-652 acts as the Charge relay system in catalysis. N-linked (GlcNAc...) asparagine glycans are attached at residues Asn-704, Asn-781, Asn-849, and Asn-896. A helical transmembrane segment spans residues 971 to 991 (YIVIIVAGGTMSLIITVLILI). Residue Asn-1018 is glycosylated (N-linked (GlcNAc...) asparagine). The next 4 membrane-spanning stretches (helical) occupy residues 1071 to 1091 (FIIE…ASIL), 1116 to 1136 (FIII…SSWI), 1189 to 1209 (GILL…VFIF), and 1210 to 1230 (TISW…AIVT). The 284-residue stretch at 1075-1358 (ITISTACSLV…LFGVYSSYVQ (284 aa)) folds into the ABC transmembrane type-1 domain. N-linked (GlcNAc...) asparagine glycosylation is present at Asn-1295. 2 helical membrane-spanning segments follow: residues 1304-1324 (WLMV…LAIQ) and 1327-1347 (FTVG…DSST). Residues 1386 to 1529 (DNIIDTNQDN…NDDPNDNNGI (144 aa)) form a disordered region. Low complexity predominate over residues 1388-1402 (IIDTNQDNNNNNNND). A compositionally biased stretch (acidic residues) spans 1403 to 1415 (DISDSSSDDDDDN). Asn-1424 carries an N-linked (GlcNAc...) asparagine glycan. Residues 1465-1494 (GEGIDNNNNNNNDNNINDDNNQQDPNNNNN) are compositionally biased toward low complexity. The segment covering 1495-1514 (EIDDDGDDDGDDDDEGEDEN) has biased composition (acidic residues). The segment covering 1515–1529 (NNNNNNDDPNDNNGI) has biased composition (low complexity). An ABC transporter domain is found at 1576–1813 (IEFKNVSFCY…KGKYYRMFAF (238 aa)). The N-linked (GlcNAc...) asparagine glycan is linked to Asn-1580. Residue 1611–1618 (GPSGSGKS) participates in ATP binding. 2 N-linked (GlcNAc...) asparagine glycosylation sites follow: Asn-1715 and Asn-1755.

It in the C-terminal section; belongs to the ABC transporter superfamily. ABCB family. Multidrug resistance exporter (TC 3.A.1.201) subfamily. The protein in the N-terminal section; belongs to the peptidase S8 family.

The protein resides in the membrane. The sequence is that of Serine protease/ABC transporter B family protein tagD (tagD) from Dictyostelium discoideum (Social amoeba).